A 544-amino-acid chain; its full sequence is uncharacterized protein (544 aa).

The N-terminal stretch at 1 to 34 (MIARRMLCARPWGPSCVVCALCGALAALVPAVGA) is a signal peptide. The tract at residues 38-69 (AVPAPGTPAPPAHTASEAVPPAPEPRAEGEQP) is disordered.

It belongs to the TP096X family.

This is an uncharacterized protein from Treponema pallidum (strain Nichols).